The sequence spans 473 residues: Ribosomal RNA small subunit methyltransferase F (473 aa).

S-adenosyl-L-methionine contacts are provided by residues 123–129 (AAAPGSK), Glu147, Asp174, and Asp192. Cys245 acts as the Nucleophile in catalysis.

This sequence belongs to the class I-like SAM-binding methyltransferase superfamily. RsmB/NOP family.

The protein localises to the cytoplasm. The enzyme catalyses cytidine(1407) in 16S rRNA + S-adenosyl-L-methionine = 5-methylcytidine(1407) in 16S rRNA + S-adenosyl-L-homocysteine + H(+). In terms of biological role, specifically methylates the cytosine at position 1407 (m5C1407) of 16S rRNA. The sequence is that of Ribosomal RNA small subunit methyltransferase F from Vibrio atlanticus (strain LGP32) (Vibrio splendidus (strain Mel32)).